Here is an 803-residue protein sequence, read N- to C-terminus: MIPVTEFRQFSEQQPAFRVLKPWWDVFTDYLSVAMLMIGVFGCTLQVMQDKIICLPKRVQPAQNHSSVPNVSQAVISTTPLPPPKPSPTNPATVEMKGLKTDLDLQQYSFINQMCYERALHWYAKYFPYLVLIHTLVFMLCSNFWFKFPGSSSKIEHFISILGKCFDSPWTTRALSEVSGEDSEEKDNRKNNMNRSGTIQSGPEGNLVRSQSLKSIPEKFVVDKSAAGALDKKEGEQAKALFEKVKKFRLHVEEGDILYAMYVRQTVLKVIKFLIIIAYNSALVSKVQFTVDCNVDIQDMTGYKNFSCNHTMAHLFSKLSFCYLCFVSIYGLTCLYTLYWLFYRSLREYSFEYVRQETGIDDIPDVKNDFAFMLHMIDQYDPLYSKRFAVFLSEVSENKLKQLNLNNEWTPDKLRQKLQTNAHNRLELPLIMLSGLPDTVFEITELQSLKLEIIKNVMIPATIAQLDNLQELCLHQCSVKIHSAALSFLKENLKVLSVKFDDMRELPPWMYGLRNLEELYLVGSLSHDISKNVTLESLRDLKSLKILSIKSNVSKIPQAVVDVSSHLQKMCVHNDGTKLVMLNNLKKMTNLTELELVHCDLERIPHAVFSLLSLQELDLKENNLKSIEEIVSFQHLRKLTVLKLWYNSIAYIPEHIKKLTSLERLFFSHNKVEVLPSHLFLCNKIRYLDLSYNDIRFIPPEIGVLQSLQYFSITCNKVESLPDELYFCKKLKTLKIGKNSLSVLSPKIGNLLFLSYLDIKGNHFEVLPPELGDCRALKRAGLVVEDALFETLPSDVREQMKAD.

The Cytoplasmic portion of the chain corresponds to 1 to 22 (MIPVTEFRQFSEQQPAFRVLKP). The chain crosses the membrane as a helical span at residues 23-48 (WWDVFTDYLSVAMLMIGVFGCTLQVM). The Extracellular portion of the chain corresponds to 49–124 (QDKIICLPKR…CYERALHWYA (76 aa)). Intrachain disulfides connect Cys54–Cys308 and Cys115–Cys293. Residues 125 to 144 (KYFPYLVLIHTLVFMLCSNF) form a helical membrane-spanning segment. Over 145–262 (WFKFPGSSSK…EEGDILYAMY (118 aa)) the chain is Cytoplasmic. Residues 177–206 (EVSGEDSEEKDNRKNNMNRSGTIQSGPEGN) are disordered. The span at 191–206 (NNMNRSGTIQSGPEGN) shows a compositional bias: polar residues. Phosphoserine is present on residues Ser212 and Ser215. Residues 263–284 (VRQTVLKVIKFLIIIAYNSALV) traverse the membrane as a helical segment. Residues 285–314 (SKVQFTVDCNVDIQDMTGYKNFSCNHTMAH) lie on the Extracellular side of the membrane. The helical transmembrane segment at 315–339 (LFSKLSFCYLCFVSIYGLTCLYTLY) threads the bilayer. Over 340-803 (WLFYRSLREY…SDVREQMKAD (464 aa)) the chain is Cytoplasmic. LRR repeat units lie at residues 409 to 420 (WTPDKLRQKLQT), 421 to 443 (NAHNRLELPLIMLSGLPDTVFEI), 446 to 466 (LQSLKLEIIKNVMIPATIAQL), 467 to 488 (DNLQELCLHQCSVKIHSAALSF), 490 to 513 (KENLKVLSVKFDDMRELPPWMYGL), 515 to 537 (NLEELYLVGSLSHDISKNVTLES), 541 to 563 (LKSLKILSIKSNVSKIPQAVVDV), 566 to 586 (HLQKMCVHNDGTKLVMLNNLK), 588 to 611 (MTNLTELELVHCDLERIPHAVFSL), 613 to 635 (SLQELDLKENNLKSIEEIVSFQH), 637 to 659 (RKLTVLKLWYNSIAYIPEHIKKL), 660 to 682 (TSLERLFFSHNKVEVLPSHLFLC), 684 to 705 (KIRYLDLSYNDIRFIPPEIGVL), 706 to 728 (QSLQYFSITCNKVESLPDELYFC), 730 to 751 (KLKTLKIGKNSLSVLSPKIGNL), 752 to 774 (LFLSYLDIKGNHFEVLPPELGDC), and 776 to 799 (ALKRAGLVVEDALFETLPSDVREQ).

This sequence belongs to the LRRC8 family. As to quaternary structure, heterohexamer; oligomerizes with other LRRC8 proteins (LRRC8A, LRRC8B, LRRC8D and/or LRRC8E) to form a heterohexamer. Homoheptamer; inactive, likely because it is not targeted to the plasma membrane in the absence of LRRC8A. In vivo, the subunit composition may depend primarily on expression levels, and heterooligomeric channels containing various proportions of the different LRRC8 proteins may coexist. Expressed at very low levels in adipose tissue.

Its subcellular location is the cell membrane. The protein resides in the endoplasmic reticulum membrane. It carries out the reaction chloride(in) = chloride(out). It catalyses the reaction iodide(out) = iodide(in). The enzyme catalyses taurine(out) = taurine(in). The catalysed reaction is 2',3'-cGAMP(out) = 2',3'-cGAMP(in). Its function is as follows. Non-essential component of the volume-regulated anion channel (VRAC, also named VSOAC channel), an anion channel required to maintain a constant cell volume in response to extracellular or intracellular osmotic changes. The VRAC channel conducts iodide better than chloride and can also conduct organic osmolytes like taurine. Plays a redundant role in the efflux of amino acids, such as aspartate and glutamate, in response to osmotic stress. The VRAC channel also mediates transport of immunoreactive cyclic dinucleotide GMP-AMP (2'-3'-cGAMP), an immune messenger produced in response to DNA virus in the cytosol. Channel activity requires LRRC8A plus at least one other family member (LRRC8B, LRRC8C, LRRC8D or LRRC8E); channel characteristics depend on the precise subunit composition. May play a role in adipogenesis. This chain is Volume-regulated anion channel subunit LRRC8C, found in Mus musculus (Mouse).